The sequence spans 118 residues: Small ribosomal subunit protein uS13 (118 aa).

The segment at 94 to 118 (SLPLRGQRTKTNARTRKGPRKPIKK) is disordered.

It belongs to the universal ribosomal protein uS13 family. As to quaternary structure, part of the 30S ribosomal subunit. Forms a loose heterodimer with protein S19. Forms two bridges to the 50S subunit in the 70S ribosome.

Functionally, located at the top of the head of the 30S subunit, it contacts several helices of the 16S rRNA. In the 70S ribosome it contacts the 23S rRNA (bridge B1a) and protein L5 of the 50S subunit (bridge B1b), connecting the 2 subunits; these bridges are implicated in subunit movement. Contacts the tRNAs in the A and P-sites. This chain is Small ribosomal subunit protein uS13, found in Shewanella oneidensis (strain ATCC 700550 / JCM 31522 / CIP 106686 / LMG 19005 / NCIMB 14063 / MR-1).